The chain runs to 114 residues: DNA-(apurinic or apyrimidinic site) endonuclease (114 aa).

It belongs to the apurinic/apyrimidinic endonuclease family. In terms of assembly, interacts with host Ung; this interaction allows the viral AP endonuclease to localize to newly formed AP sites and cleave them, leading to inhibition of bacterial growth.

In terms of biological role, performs endonucleolytic cleavage at abasic sites, which are generated by the base-excision activity of host Ung. The cleavage generates a 5'-deoxyribose phosphate and 3'-hydroxyl end. The sites are specifically recognized through the formation of a complex with host Ung. The viral endonucleolytic activity damages the host DNA, blocks host DNA replication and induces cell division arrest. This may provide an advantage for the phage and save nucleotides for the viral replication since it specifically targets the host DNA, which possesses more misincorporated uracils than the viral genome. The sequence is that of DNA-(apurinic or apyrimidinic site) endonuclease from Escherichia phage T5 (Enterobacteria phage T5).